The sequence spans 90 residues: Probable Fe(2+)-trafficking protein (90 aa).

It belongs to the Fe(2+)-trafficking protein family.

In terms of biological role, could be a mediator in iron transactions between iron acquisition and iron-requiring processes, such as synthesis and/or repair of Fe-S clusters in biosynthetic enzymes. The protein is Probable Fe(2+)-trafficking protein of Koribacter versatilis (strain Ellin345).